Reading from the N-terminus, the 705-residue chain is MTIKTADIQFNADGTPIATNFDDVYFSSFDGAAETEYVFLHNNLLPQRWQQWSKPTFVIAETGFGTGLNLLVTLAVFKQHLAQHPASTFTLHYISTEKFPLTHTDLVQALNAFVQFEDDAKALIAQYPMPLDGCHRMSFLNNRVIVDLWLGDIHDSLPQWHTNENGLVDAWYLDGFAPSKNPQMWSPQLFEQMARLASNGCTFATFTAAGFVKRGLRDAGFEVEKRKGHGRKREMLAGIIARELETKVNRQQARYYQRGAYMNSTSVNTRCAENHAQTALASKPKVAIIGAGIAGASMAYAMAKKGYDCDIYFNDATPAQGASGNPQAGFYPQLNVDASHASQINAHSFVYAANQYRQLQSQGFHFAHQWCGVLQLGFKPALAERYAKLTESQLWPGELVRYVKPSEAAQLANCEMPYSGLFMPLGGWIDPAQLVDALFDAAAKLSQVRLYSHHALNGIEQKNVSITAQENTRWQLHFEASEATSGMNKNTSLAQADIVIYATGAQSHDIAALADFPLRMVRGQVEAVPTQTALSKLNTVLCHKGYLTPEYNGQHALGSTYVKNDLSTDYRLSEQDKNLATHYQSLSDCQWAQEVVGNAQGRAAVRCSSPDHLPLVGALADIEKQKKELSDLYKALPLSYYPKGSNMNNVFVLTGLGSRGLTTAPLMAEVLASQISGQPLPMANDLLNTLNPNRFLIRQLIRREV.

Residues 1 to 241 (MTIKTADIQF…KREMLAGIIA (241 aa)) form a tRNA (mnm(5)s(2)U34)-methyltransferase region. Positions 289–705 (IGAGIAGASM…LIRQLIRREV (417 aa)) are FAD-dependent cmnm(5)s(2)U34 oxidoreductase.

In the N-terminal section; belongs to the methyltransferase superfamily. tRNA (mnm(5)s(2)U34)-methyltransferase family. It in the C-terminal section; belongs to the DAO family. The cofactor is FAD.

It is found in the cytoplasm. The enzyme catalyses 5-aminomethyl-2-thiouridine(34) in tRNA + S-adenosyl-L-methionine = 5-methylaminomethyl-2-thiouridine(34) in tRNA + S-adenosyl-L-homocysteine + H(+). Catalyzes the last two steps in the biosynthesis of 5-methylaminomethyl-2-thiouridine (mnm(5)s(2)U) at the wobble position (U34) in tRNA. Catalyzes the FAD-dependent demodification of cmnm(5)s(2)U34 to nm(5)s(2)U34, followed by the transfer of a methyl group from S-adenosyl-L-methionine to nm(5)s(2)U34, to form mnm(5)s(2)U34. The polypeptide is tRNA 5-methylaminomethyl-2-thiouridine biosynthesis bifunctional protein MnmC (Pseudoalteromonas atlantica (strain T6c / ATCC BAA-1087)).